A 498-amino-acid polypeptide reads, in one-letter code: ATP synthase subunit beta, chloroplastic (498 aa).

Residue 172–179 (GGAGVGKT) coordinates ATP.

The protein belongs to the ATPase alpha/beta chains family. As to quaternary structure, F-type ATPases have 2 components, CF(1) - the catalytic core - and CF(0) - the membrane proton channel. CF(1) has five subunits: alpha(3), beta(3), gamma(1), delta(1), epsilon(1). CF(0) has four main subunits: a(1), b(1), b'(1) and c(9-12).

It localises to the plastid. The protein localises to the chloroplast thylakoid membrane. The catalysed reaction is ATP + H2O + 4 H(+)(in) = ADP + phosphate + 5 H(+)(out). In terms of biological role, produces ATP from ADP in the presence of a proton gradient across the membrane. The catalytic sites are hosted primarily by the beta subunits. In Atropa belladonna (Belladonna), this protein is ATP synthase subunit beta, chloroplastic.